A 1958-amino-acid chain; its full sequence is Rho GTPase-activating protein 21 (1958 aa).

The disordered stretch occupies residues 1 to 42 (MMATRRTGLSEGDGDKLKACEVSKNKDGKEQSETVSLSEDET). A compositionally biased stretch (basic and acidic residues) spans 13-32 (DGDKLKACEVSKNKDGKEQS). Residues Ser36 and Ser57 each carry the phosphoserine modification. The PDZ domain occupies 50–159 (TVTLKRTSQG…TLELSVMPKD (110 aa)). 3 stretches are compositionally biased toward polar residues: residues 286–295 (SNRNNHTGPS), 306–325 (SEQT…LSIP), and 418–436 (ASQS…TTLQ). Disordered regions lie at residues 286–325 (SNRN…LSIP) and 418–458 (ASQS…QRSV). Over residues 448–458 (PQSVQIRQRSV) the composition is skewed to low complexity. Residue Ser459 is modified to Phosphoserine. Residues Arg554 and Arg575 each carry the omega-N-methylarginine modification. Ser612, Ser616, and Ser625 each carry phosphoserine. The span at 659–687 (SLLNQQTWVRTDSAPDQQVETGKSPSLSG) shows a compositional bias: polar residues. Residues 659-751 (SLLNQQTWVR…PSGRQTPQPL (93 aa)) are disordered. Position 717 is a phosphoserine (Ser717). Residues 729–742 (LDNKEAVILREKPP) show a composition bias toward basic and acidic residues. Thr747 bears the Phosphothreonine mark. Phosphoserine is present on residues Ser857, Ser862, and Ser881. A disordered region spans residues 859-885 (DHESVGPPSLDAQPNSKTERSKSYDEG). The segment covering 875 to 885 (KTERSKSYDEG) has biased composition (basic and acidic residues). At Tyr882 the chain carries Phosphotyrosine. Phosphoserine occurs at positions 924, 926, 954, 1099, and 1115. The segment at 930–1097 (SDAAKEGWLH…AKSEPKTQSP (168 aa)) is interaction with ARF1 and ARF6. The 110-residue stretch at 931–1040 (DAAKEGWLHF…WIKTIQESSN (110 aa)) folds into the PH domain. The tract at residues 1086 to 1133 (LGAKSEPKTQSPHSPKEESERKLLSKDDTSPPKDKGTWRKGIPSIMRK) is disordered. Residues 1099 to 1122 (SPKEESERKLLSKDDTSPPKDKGT) show a composition bias toward basic and acidic residues. Positions 1147 to 1339 (VRLDDCPPAH…TLIQHHDWFF (193 aa)) constitute a Rho-GAP domain. Disordered stretches follow at residues 1348 to 1401 (LTTV…GSGK), 1418 to 1575 (SRKR…KHSE), 1598 to 1642 (SLDS…SEFP), and 1655 to 1686 (RGKL…SSLD). Over residues 1349-1362 (TTVQEESTVDSQPV) the composition is skewed to polar residues. Residues 1383 to 1401 (SDSATSDSTKSKGSWGSGK) are compositionally biased toward low complexity. Phosphoserine is present on residues Ser1418, Ser1432, and Ser1433. Basic and acidic residues-rich tracts occupy residues 1441-1466 (FFKK…ETLG) and 1477-1493 (NSTR…KISL). Residue Lys1444 forms a Glycyl lysine isopeptide (Lys-Gly) (interchain with G-Cter in SUMO) linkage. Ser1504 is subject to Phosphoserine. Thr1516 is modified (phosphothreonine). Position 1527 is a phosphoserine (Ser1527). The span at 1544-1559 (SDSGTLLSTSSQASLA) shows a compositional bias: low complexity. The interaction with CTNNA1 stretch occupies residues 1592–1861 (SATYLTSLDS…WLARERLRTS (270 aa)). Over residues 1603–1612 (RLSPEVQSVA) the composition is skewed to polar residues. Over residues 1624-1634 (SELISEGRPVE) the composition is skewed to basic and acidic residues. Residue Ser1669 is modified to Phosphoserine. A compositionally biased stretch (polar residues) spans 1671 to 1686 (GSELSCTEGSLTSSLD). Residue Thr1682 is modified to Phosphothreonine. Residue Ser1742 is modified to Phosphoserine. A disordered region spans residues 1860–1958 (TSTSDLSRGE…GSKAEFHPCL (99 aa)). Residues 1874–1909 (QTENPSTREIATTDTPLSLHCNTGSSSSTLASTNRP) are compositionally biased toward polar residues. Residue Ser1917 is modified to Phosphoserine. Polar residues predominate over residues 1918–1931 (PDQINGESFQNVSK).

As to quaternary structure, interacts with GTP-bound ARF1 and ARF6. Interacts with CTNNA1. Sumoylated with SUMO2 and SUMO3 in proliferating lymphocytes. As to expression, widely expressed with higher expression in brain, heart, skeletal muscle and placenta.

The protein resides in the golgi apparatus membrane. The protein localises to the cell junction. Its subcellular location is the cytoplasmic vesicle membrane. It is found in the cytoplasm. It localises to the cytoskeleton. Functionally, functions as a GTPase-activating protein (GAP) for RHOA and CDC42. Downstream partner of ARF1 which may control Golgi apparatus structure and function. Also required for CTNNA1 recruitment to adherens junctions. The chain is Rho GTPase-activating protein 21 (ARHGAP21) from Homo sapiens (Human).